The following is a 158-amino-acid chain: 2-C-methyl-D-erythritol 2,4-cyclodiphosphate synthase (158 aa).

A divalent metal cation contacts are provided by Asp9 and His11. 4-CDP-2-C-methyl-D-erythritol 2-phosphate is bound by residues 9 to 11 and 35 to 36; these read DVH and HS. His43 contributes to the a divalent metal cation binding site. 4-CDP-2-C-methyl-D-erythritol 2-phosphate-binding positions include 57-59, 62-66, 101-107, 133-136, Phe140, and Arg143; these read DIG, FPDTD, AQKPKMA, and TTTE.

It belongs to the IspF family. As to quaternary structure, homotrimer. Requires a divalent metal cation as cofactor.

It carries out the reaction 4-CDP-2-C-methyl-D-erythritol 2-phosphate = 2-C-methyl-D-erythritol 2,4-cyclic diphosphate + CMP. Its pathway is isoprenoid biosynthesis; isopentenyl diphosphate biosynthesis via DXP pathway; isopentenyl diphosphate from 1-deoxy-D-xylulose 5-phosphate: step 4/6. Its function is as follows. Involved in the biosynthesis of isopentenyl diphosphate (IPP) and dimethylallyl diphosphate (DMAPP), two major building blocks of isoprenoid compounds. Catalyzes the conversion of 4-diphosphocytidyl-2-C-methyl-D-erythritol 2-phosphate (CDP-ME2P) to 2-C-methyl-D-erythritol 2,4-cyclodiphosphate (ME-CPP) with a corresponding release of cytidine 5-monophosphate (CMP). This Bacillus cereus (strain ATCC 10987 / NRS 248) protein is 2-C-methyl-D-erythritol 2,4-cyclodiphosphate synthase.